Consider the following 193-residue polypeptide: Probable oligoribonuclease (193 aa).

In terms of domain architecture, Exonuclease spans 15-177; that stretch reads IIWIDCEMTG…DDIMESIAEL (163 aa). Tyr136 is a catalytic residue.

The protein belongs to the oligoribonuclease family.

Functionally, 3'-to-5' exoribonuclease specific for small oligoribonucleotides. This chain is Probable oligoribonuclease, found in Caenorhabditis elegans.